We begin with the raw amino-acid sequence, 267 residues long: Glutamate racemase (267 aa).

Residues 10–11 (DS) and 42–43 (YG) each bind substrate. Catalysis depends on Cys-73, which acts as the Proton donor/acceptor. 74–75 (NT) serves as a coordination point for substrate. Residue Cys-183 is the Proton donor/acceptor of the active site. 184–185 (TH) is a substrate binding site.

The protein belongs to the aspartate/glutamate racemases family.

It carries out the reaction L-glutamate = D-glutamate. It functions in the pathway cell wall biogenesis; peptidoglycan biosynthesis. In terms of biological role, provides the (R)-glutamate required for cell wall biosynthesis. This is Glutamate racemase from Lactobacillus acidophilus (strain ATCC 700396 / NCK56 / N2 / NCFM).